Reading from the N-terminus, the 469-residue chain is Origin recognition complex subunit 6 (469 aa).

Low complexity-rich tracts occupy residues 218 to 234 (SSTL…TAPK) and 275 to 308 (ATPT…LSST). Disordered regions lie at residues 218–241 (SSTL…PIPS), 275–309 (ATPT…SSTN), 356–423 (ESPF…EGDL), and 436–469 (KEQQ…SFFK). Composition is skewed to basic and acidic residues over residues 380–390 (SRDELEKESEL) and 409–423 (QKEK…EGDL). Residues 454 to 469 (TPVNATKQLTLDSFFK) are compositionally biased toward polar residues.

Belongs to the ORC6 family. In terms of assembly, ORC is composed of six subunits.

It localises to the nucleus. Its function is as follows. Component of the origin recognition complex (ORC) that binds origins of replication. DNA-binding is ATP-dependent, however specific DNA sequences that define origins of replication have not been identified so far. ORC is required to assemble the pre-replication complex necessary to initiate DNA replication. The sequence is that of Origin recognition complex subunit 6 (orcF) from Dictyostelium discoideum (Social amoeba).